Here is a 261-residue protein sequence, read N- to C-terminus: Putative cytochrome YdhU (261 aa).

Residues 25-45 (FWPVWLIIAGVLLVGMWLVLG) traverse the membrane as a helical segment. Residue His-77 participates in heme b binding. 3 helical membrane passes run 81–101 (ALLFVLLLASGLINHFAMVGA), 108–128 (VAVHEVCGFLLLACWLGFVLI), and 182–202 (VAYVGVMYGLLPLLLLTGLLC). His-111 is a heme b binding site. Heme b is bound by residues His-223 and His-237. A helical membrane pass occupies residues 224-244 (FALAFISLFFIFGHLYLCTTG). A menaquinone is bound at residue His-237.

Belongs to the PhsC family. It depends on heme as a cofactor.

Its subcellular location is the cell inner membrane. This chain is Putative cytochrome YdhU (ydhU), found in Escherichia coli (strain K12).